Reading from the N-terminus, the 59-residue chain is Large ribosomal subunit protein uL30 (59 aa).

Belongs to the universal ribosomal protein uL30 family. Part of the 50S ribosomal subunit.

The protein is Large ribosomal subunit protein uL30 of Aeromonas hydrophila subsp. hydrophila (strain ATCC 7966 / DSM 30187 / BCRC 13018 / CCUG 14551 / JCM 1027 / KCTC 2358 / NCIMB 9240 / NCTC 8049).